A 449-amino-acid chain; its full sequence is L-seryl-tRNA(Sec) selenium transferase (449 aa).

Residue K286 is modified to N6-(pyridoxal phosphate)lysine.

The protein belongs to the SelA family. It depends on pyridoxal 5'-phosphate as a cofactor.

The protein resides in the cytoplasm. The enzyme catalyses L-seryl-tRNA(Sec) + selenophosphate + H(+) = L-selenocysteinyl-tRNA(Sec) + phosphate. Its pathway is aminoacyl-tRNA biosynthesis; selenocysteinyl-tRNA(Sec) biosynthesis; selenocysteinyl-tRNA(Sec) from L-seryl-tRNA(Sec) (bacterial route): step 1/1. Its function is as follows. Converts seryl-tRNA(Sec) to selenocysteinyl-tRNA(Sec) required for selenoprotein biosynthesis. This chain is L-seryl-tRNA(Sec) selenium transferase, found in Sulfurimonas denitrificans (strain ATCC 33889 / DSM 1251) (Thiomicrospira denitrificans (strain ATCC 33889 / DSM 1251)).